Consider the following 305-residue polypeptide: tRNA uridine(34) hydroxylase (305 aa).

The region spanning 136–230 (ADENTVVVDK…YLEEVPREQS (95 aa)) is the Rhodanese domain. The Cysteine persulfide intermediate role is filled by C190.

Belongs to the TrhO family.

It carries out the reaction uridine(34) in tRNA + AH2 + O2 = 5-hydroxyuridine(34) in tRNA + A + H2O. Its function is as follows. Catalyzes oxygen-dependent 5-hydroxyuridine (ho5U) modification at position 34 in tRNAs. The chain is tRNA uridine(34) hydroxylase from Brucella melitensis biotype 1 (strain ATCC 23456 / CCUG 17765 / NCTC 10094 / 16M).